The primary structure comprises 186 residues: MSVTSIMDDLKRRMDGAISAFKHELSGLRTGRASASLLEPLTVEAYGSVVPIKQVANISVLEPRMLSVSVWDKTMVGAVERAIRDCGFGLNPIVDGMNLRIPLPELNEERRKELVKIAHQYAEQARVAIRHVRRDGMDNLKKLEKEGEISQDEARSLSEKVQKLTDDAIADIDKILIMKETEIMQV.

Belongs to the RRF family.

The protein localises to the cytoplasm. In terms of biological role, responsible for the release of ribosomes from messenger RNA at the termination of protein biosynthesis. May increase the efficiency of translation by recycling ribosomes from one round of translation to another. The sequence is that of Ribosome-recycling factor from Bartonella bacilliformis (strain ATCC 35685 / KC583 / Herrer 020/F12,63).